We begin with the raw amino-acid sequence, 207 residues long: Outer-membrane lipoprotein LolB (207 aa).

Positions 1 to 21 (MPLPDFRLIRLLPLAALVLTA) are cleaved as a signal peptide. C22 is lipidated: N-palmitoyl cysteine. Residue C22 is the site of S-diacylglycerol cysteine attachment.

Belongs to the LolB family. Monomer.

The protein resides in the cell outer membrane. Plays a critical role in the incorporation of lipoproteins in the outer membrane after they are released by the LolA protein. The chain is Outer-membrane lipoprotein LolB from Escherichia coli (strain SMS-3-5 / SECEC).